The following is a 698-amino-acid chain: RNA cytosine-C(5)-methyltransferase NSUN2 (698 aa).

The segment covering 1-10 has biased composition (basic residues); the sequence is MGRKNRRNRQ. The interval 1–28 is disordered; it reads MGRKNRRNRQRRTEQRSPAEEERRKARE. Basic and acidic residues predominate over residues 11-28; sequence RRTEQRSPAEEERRKARE. Residues 182–188, Asp-213, Asp-240, and Asp-266 contribute to the S-adenosyl-L-methionine site; that span reads CAAPGSK. The active-site Nucleophile is the Cys-319. The tract at residues 472-496 is disordered; it reads AVDAENGETKPCTNQSGSSKTDSVC. Over residues 482–493 the composition is skewed to polar residues; sequence PCTNQSGSSKTD.

Belongs to the class I-like SAM-binding methyltransferase superfamily. RsmB/NOP family. TRM4 subfamily.

It is found in the nucleus. Its subcellular location is the nucleolus. The protein resides in the cytoplasm. It localises to the mitochondrion. The protein localises to the cytoskeleton. It is found in the spindle. Its subcellular location is the secreted. The protein resides in the extracellular exosome. It catalyses the reaction cytidine(48) in tRNA + S-adenosyl-L-methionine = 5-methylcytidine(48) in tRNA + S-adenosyl-L-homocysteine + H(+). The catalysed reaction is cytidine(49) in tRNA + S-adenosyl-L-methionine = 5-methylcytidine(49) in tRNA + S-adenosyl-L-homocysteine + H(+). It carries out the reaction cytidine(50) in tRNA + S-adenosyl-L-methionine = 5-methylcytidine(50) in tRNA + S-adenosyl-L-homocysteine + H(+). The enzyme catalyses cytidine(34) in tRNA precursor + S-adenosyl-L-methionine = 5-methylcytidine(34) in tRNA precursor + S-adenosyl-L-homocysteine + H(+). It catalyses the reaction a cytidine in mRNA + S-adenosyl-L-methionine = a 5-methylcytidine in mRNA + S-adenosyl-L-homocysteine + H(+). In terms of biological role, RNA cytosine C(5)-methyltransferase that methylates cytosine to 5-methylcytosine (m5C) in various RNAs, such as tRNAs, mRNAs and some long non-coding RNAs (lncRNAs). Involved in various processes, such as epidermal stem cell differentiation, testis differentiation and maternal to zygotic transition during early development: acts by increasing protein synthesis; cytosine C(5)-methylation promoting tRNA stability and preventing mRNA decay. Methylates cytosine to 5-methylcytosine (m5C) at positions 34 and 48 of intron-containing tRNA(Leu)(CAA) precursors, and at positions 48, 49 and 50 of tRNA(Gly)(GCC) precursors. tRNA methylation is required generation of RNA fragments derived from tRNAs (tRFs). Also mediates C(5)-methylation of mitochondrial tRNAs. Catalyzes cytosine C(5)-methylation of mRNAs, leading to stabilize them and prevent mRNA decay. Cytosine C(5)-methylation of mRNAs also regulates mRNA export. Also mediates cytosine C(5)-methylation of non-coding RNAs, such as vault RNAs (vtRNAs), promoting their processing into regulatory small RNAs. Required for proper spindle assembly and chromosome segregation, independently of its methyltransferase activity. This Xenopus laevis (African clawed frog) protein is RNA cytosine-C(5)-methyltransferase NSUN2.